The primary structure comprises 86 residues: METAIVAAASAIGAGIAVATGIGAGIGQGIAAAKAAEAVGNQPEAKGDITSTLLLGVAIAESSAIYGLVISIILLFVNPFFKYLGM.

Helical transmembrane passes span 4 to 24 (AIVA…GIGA) and 57 to 77 (VAIA…LLFV).

The protein belongs to the ATPase C chain family. In terms of assembly, F-type ATPases have 2 components, F(1) - the catalytic core - and F(0) - the membrane proton channel. F(1) has five subunits: alpha(3), beta(3), gamma(1), delta(1), epsilon(1). F(0) has three main subunits: a(1), b(2) and c(10-14). The alpha and beta chains form an alternating ring which encloses part of the gamma chain. F(1) is attached to F(0) by a central stalk formed by the gamma and epsilon chains, while a peripheral stalk is formed by the delta and b chains.

The protein localises to the cell membrane. Functionally, f(1)F(0) ATP synthase produces ATP from ADP in the presence of a proton or sodium gradient. F-type ATPases consist of two structural domains, F(1) containing the extramembraneous catalytic core and F(0) containing the membrane proton channel, linked together by a central stalk and a peripheral stalk. During catalysis, ATP synthesis in the catalytic domain of F(1) is coupled via a rotary mechanism of the central stalk subunits to proton translocation. Key component of the F(0) channel; it plays a direct role in translocation across the membrane. A homomeric c-ring of between 10-14 subunits forms the central stalk rotor element with the F(1) delta and epsilon subunits. This Clostridioides difficile (strain 630) (Peptoclostridium difficile) protein is ATP synthase subunit c.